A 354-amino-acid chain; its full sequence is C-C chemokine receptor type 5 (354 aa).

Residues 1 to 32 (MDFQGSVPTYSYDIDYGMSAPCQKINVKQIAA) are Extracellular-facing. The O-linked (GalNAc...) serine glycan is linked to serine 6. 3 positions are modified to sulfotyrosine: tyrosine 10, tyrosine 12, and tyrosine 16. Intrachain disulfides connect cysteine 22-cysteine 271 and cysteine 103-cysteine 180. Residues 33 to 60 (QLLPPLYSLVFIFGFVGNMMVFLILISC) traverse the membrane as a helical segment. Residues 61 to 70 (KKLKSVTDIY) are Cytoplasmic-facing. Residues 71–91 (LLNLAISDLLFLLTLPFWAHY) form a helical membrane-spanning segment. The Extracellular portion of the chain corresponds to 92-104 (AANEWVFGNIMCK). Residues 105 to 126 (VFTGLYHIGYFGGIFFIILLTI) traverse the membrane as a helical segment. The Cytoplasmic portion of the chain corresponds to 127–143 (DRYLAIVHAVFALKVRT). The chain crosses the membrane as a helical span at residues 144–168 (VNFGVITSVVTWAVAVFASLPEIIF). Topologically, residues 169-200 (TRSQKEGFHYTCSPHFPHTQYHFWKSFQTLKM) are extracellular. Residues 201-220 (VILSLILPLLVMVICYSGIL) traverse the membrane as a helical segment. The Cytoplasmic segment spans residues 221-237 (HTLFRCRNEKKRHRAVR). A helical membrane pass occupies residues 238–262 (LIFAIMIVYFLFWTPYNIVLLLTTF). The Extracellular segment spans residues 263–279 (QEFFGLNNCSSSNRLDQ). Residues 280–303 (AMQATETLGMTHCCLNPVIYAFVG) traverse the membrane as a helical segment. The Cytoplasmic portion of the chain corresponds to 304-354 (EKFRSYLSVFFRKHMVKRFCKRCSIFQQDNPDRASSVYTRSTGEHEVSTGL). 2 S-palmitoyl cysteine lipidation sites follow: cysteine 323 and cysteine 326. Serine 338, serine 339, serine 344, and serine 351 each carry phosphoserine; by BARK1.

This sequence belongs to the G-protein coupled receptor 1 family. Interacts with PRAF2. Efficient ligand binding to CCL3/MIP-1alpha and CCL4/MIP-1beta requires sulfation, O-glycosylation and sialic acid modifications. Glycosylation on Ser-6 is required for efficient binding of CCL4. Interacts with GRK2. Interacts with ARRB1 and ARRB2. Interacts with CNIH4. Interacts with S100A4; this interaction stimulates T-lymphocyte chemotaxis. Sulfated on at least 2 of the N-terminal tyrosines. Sulfation is required for efficient binding of the chemokines, CCL3 and CCL4. Post-translationally, O-glycosylated, but not N-glycosylated. Ser-6 appears to be the major site. Also sialylated glycans present which contribute to chemokine binding. In terms of processing, palmitoylation in the C-terminal is important for cell surface expression. Phosphorylation on serine residues in the C-terminal is stimulated by binding CC chemokines especially by APO-RANTES.

The protein resides in the cell membrane. Its function is as follows. Receptor for a number of inflammatory CC-chemokines including CCL3/MIP-1-alpha, CCL4/MIP-1-beta and RANTES and subsequently transduces a signal by increasing the intracellular calcium ion level. May play a role in the control of granulocytic lineage proliferation or differentiation. Participates in T-lymphocyte migration to the infection site by acting as a chemotactic receptor. This Mus musculus (Mouse) protein is C-C chemokine receptor type 5 (Ccr5).